A 354-amino-acid chain; its full sequence is UPF0283 membrane protein HI_0043 (354 aa).

A run of 3 helical transmembrane segments spans residues 57–77, 87–107, and 211–231; these read LLKF…VQWI, IYLA…KEII, and ESAV…FIAW.

Belongs to the UPF0283 family.

It is found in the cell inner membrane. This is UPF0283 membrane protein HI_0043 from Haemophilus influenzae (strain ATCC 51907 / DSM 11121 / KW20 / Rd).